The sequence spans 395 residues: uncharacterized protein (395 aa).

Transmembrane regions (helical) follow at residues 15-35, 56-76, 86-106, 131-151, 175-195, 254-274, 298-318, and 348-368; these read ILAF…VTVF, WPWI…NIII, FHAP…FQIV, AVLL…LITW, WFSF…IFIA, LANI…FAIV, IAIT…TQFV, and VYIP…QVVI.

It localises to the cell membrane. This is an uncharacterized protein from Mycoplasma pneumoniae (strain ATCC 29342 / M129 / Subtype 1) (Mycoplasmoides pneumoniae).